Consider the following 280-residue polypeptide: Movement protein (280 aa).

A disordered region spans residues Glu248 to Ser267. The span at Glu255–Ser267 shows a compositional bias: low complexity.

This sequence belongs to the cucumovirus movement protein family.

It localises to the host cell junction. Its subcellular location is the host plasmodesma. Transports viral genome to neighboring plant cells directly through plasmosdesmata, without any budding. The movement protein allows efficient cell to cell propagation, by bypassing the host cell wall barrier. Acts by forming a tubular structure at the host plasmodesmata, enlarging it enough to allow free passage of virion capsids. This chain is Movement protein, found in Cucumis sativus (Cucumber).